We begin with the raw amino-acid sequence, 342 residues long: Ubiquitin fusion degradation protein 1 homolog (342 aa).

2 disordered regions span residues phenylalanine 245–alanine 276 and glutamate 318–arginine 342. Residues serine 259–alanine 275 are compositionally biased toward polar residues.

The protein belongs to the UFD1 family. Forms a complex composed of ubxn-3, ufd-1, npl-4.1 and cdc-48.1; within the complex interacts with cdc-48.1. Interacts with cdc-48.2. Interacts with npl-4.1 and/or npl-4.2.

Its subcellular location is the cytoplasm. It is found in the nucleus. Functions at a post-ubiquitination step in the ubiquitin fusion degradation (UFD) pathway. In association with npl-4.1 and/or npl-4.2 and ATPase cdc-48.1 and/or cdc-48.2, involved in the cytoplasmic elimination of misfolded proteins exported from the ER. This pathway, known as ERAD, prevents the activation of the unfolded protein response (UPR) caused by the accumulation of misfolded proteins in the ER. During S phase and in association with npl-4.1 and/or npl-4.2, cdc-48.1 and/or cdc-48.2 and ubxn-3, ensures the degradation of DNA licensing factor cdt-1 after the initiation of DNA replication and thus the disassembly of the DNA replication CMG helicase complex by promoting the dissociation from chromatin of several of its components including cdc-45 and sld-5. Regulates ubxn-3 nuclear localization during S phase. The protein is Ubiquitin fusion degradation protein 1 homolog (ufd-1) of Caenorhabditis elegans.